The following is a 136-amino-acid chain: T-cell receptor alpha chain constant (136 aa).

The Ig-like C1-type domain occupies 19–103; sequence STLCLFTDFD…LTEKSFETDM (85 aa). Residues C22 and C72 are joined by a disulfide bond. N-linked (GlcNAc...) asparagine glycans are attached at residues N66, N80, and N109. Residues 90-111 are connecting peptide; sequence CDATLTEKSFETDMNLNFQNLS. The chain crosses the membrane as a helical span at residues 111–131; sequence SVMGLRILLLKVAGFNLLMTL. Over 132 to 136 the chain is Cytoplasmic; the sequence is RLWSS.

As to quaternary structure, alpha-beta TR is a heterodimer composed of an alpha and beta chain; disulfide-linked. The alpha-beta TR is associated with the transmembrane signaling CD3 coreceptor proteins to form the TR-CD3 (TcR or TCR). The assembly of alpha-beta TR heterodimers with CD3 occurs in the endoplasmic reticulum where a single alpha-beta TR heterodimer associates with one CD3D-CD3E heterodimer, one CD3G-CD3E heterodimer and one CD247 homodimer forming a stable octameric structure. CD3D-CD3E and CD3G-CD3E heterodimers preferentially associate with TR alpha and TR beta chains, respectively. The association of the CD247 homodimer is the last step of TcR assembly in the endoplasmic reticulum and is required for transport to the cell surface.

It is found in the cell membrane. Its function is as follows. Constant region of T cell receptor (TR) alpha chain. Alpha-beta T cell receptors are antigen specific receptors which are essential to the immune response and are present on the cell surface of T lymphocytes. Recognize peptide-major histocompatibility (MH) (pMH) complexes that are displayed by antigen presenting cells (APC), a prerequisite for efficient T cell adaptive immunity against pathogens. Binding of alpha-beta TR to pMH complex initiates TR-CD3 clustering on the cell surface and intracellular activation of LCK that phosphorylates the ITAM motifs of CD3G, CD3D, CD3E and CD247 enabling the recruitment of ZAP70. In turn, ZAP70 phosphorylates LAT, which recruits numerous signaling molecules to form the LAT signalosome. The LAT signalosome propagates signal branching to three major signaling pathways, the calcium, the mitogen-activated protein kinase (MAPK) kinase and the nuclear factor NF-kappa-B (NF-kB) pathways, leading to the mobilization of transcription factors that are critical for gene expression and essential for T cell growth and differentiation. The T cell repertoire is generated in the thymus, by V-(D)-J rearrangement. This repertoire is then shaped by intrathymic selection events to generate a peripheral T cell pool of self-MH restricted, non-autoaggressive T cells. Post-thymic interaction of alpha-beta TR with the pMH complexes shapes TR structural and functional avidity. The protein is T-cell receptor alpha chain constant of Mus musculus (Mouse).